A 456-amino-acid chain; its full sequence is MADGGSERADGRIVKMEVDYSATVDQRLPECEKLAKEGRLQEVIETLLSLEKQTRTASDMVSTSRILVAVVKMCYEAKEWDLLNENIMLLSKRRSQLKQAVAKMVQQCCTYVEEITDLPVKLRLIDTLRMVTEGKIYVEIERARLTKTLATIKEQNGDVKEAASILQELQVETYGSMEKKERVEFILEQMRLCLAVKDYIRTQIISKKINTKFFQEENTENLKLKYYNLMIQLDQHEGSYLSICKHYRAIYDTPCIQAESDKWQQALKSVVLYVILAPFDNEQSDLVHRISSDKKLEEIPKYKDLLKLFTTMELMRWSTLVEDYGVELRKGSSETPATDVFSSTEEGEKRWKDLKSRVVEHNIRIMAKYYTRITMKRMAQLLDLSVDESEAFLSNLVVNKTIFAKVDRLAGVINFQRPKDPNNLLNDWSQKLNSLMSLVNKTTHLIAKEEMIHNLQ.

A2 carries the N-acetylalanine modification. A Glycyl lysine isopeptide (Lys-Gly) (interchain with G-Cter in SUMO1); alternate cross-link involves residue K92. A Glycyl lysine isopeptide (Lys-Gly) (interchain with G-Cter in SUMO2); alternate cross-link involves residue K92. The PCI domain occupies 242–420 (SICKHYRAIY…GVINFQRPKD (179 aa)). Residue K368 is modified to N6-acetyllysine.

This sequence belongs to the proteasome subunit p55 family. Component of the 19S proteasome regulatory particle complex. The 26S proteasome consists of a 20S core particle (CP) and two 19S regulatory subunits (RP). The regulatory particle is made of a lid composed of 9 subunits including PSMD12, a base containing 6 ATPases and few additional components. Interacts with ERCC6.

Functionally, component of the 26S proteasome, a multiprotein complex involved in the ATP-dependent degradation of ubiquitinated proteins. This complex plays a key role in the maintenance of protein homeostasis by removing misfolded or damaged proteins, which could impair cellular functions, and by removing proteins whose functions are no longer required. Therefore, the proteasome participates in numerous cellular processes, including cell cycle progression, apoptosis, or DNA damage repair. This Mus musculus (Mouse) protein is 26S proteasome non-ATPase regulatory subunit 12 (Psmd12).